The following is a 78-amino-acid chain: Small ribosomal subunit protein bS16c (78 aa).

It belongs to the bacterial ribosomal protein bS16 family.

The protein localises to the plastid. Its subcellular location is the chloroplast. The chain is Small ribosomal subunit protein bS16c from Gracilaria tenuistipitata var. liui (Red alga).